The sequence spans 525 residues: GMP synthase [glutamine-hydrolyzing] (525 aa).

The 199-residue stretch at 9–207 (RILILDFGSQ…VRDICQCEAL (199 aa)) folds into the Glutamine amidotransferase type-1 domain. Catalysis depends on cysteine 86, which acts as the Nucleophile. Catalysis depends on residues histidine 181 and glutamate 183. Residues 208–400 (WTPAKIIDDA…LGLPYDMLYR (193 aa)) form the GMPS ATP-PPase domain. Residue 235–241 (SGGVDSS) coordinates ATP.

Homodimer.

The enzyme catalyses XMP + L-glutamine + ATP + H2O = GMP + L-glutamate + AMP + diphosphate + 2 H(+). Its pathway is purine metabolism; GMP biosynthesis; GMP from XMP (L-Gln route): step 1/1. In terms of biological role, catalyzes the synthesis of GMP from XMP. This Salmonella paratyphi B (strain ATCC BAA-1250 / SPB7) protein is GMP synthase [glutamine-hydrolyzing].